Consider the following 247-residue polypeptide: Probable dihydroorotate dehydrogenase B (NAD(+)), electron transfer subunit (247 aa).

The FAD-binding FR-type domain occupies 1 to 87 (MLRRVMIKET…RGPYGNGFKS (87 aa)). Cys200, Cys205, Cys208, and Cys216 together coordinate [2Fe-2S] cluster.

The protein belongs to the PyrK family. In terms of assembly, heterotetramer of 2 PyrK and 2 PyrD type B subunits. [2Fe-2S] cluster is required as a cofactor. It depends on FAD as a cofactor.

It participates in pyrimidine metabolism; UMP biosynthesis via de novo pathway; orotate from (S)-dihydroorotate (NAD(+) route): step 1/1. Responsible for channeling the electrons from the oxidation of dihydroorotate from the FMN redox center in the PyrD type B subunit to the ultimate electron acceptor NAD(+). The protein is Probable dihydroorotate dehydrogenase B (NAD(+)), electron transfer subunit of Pyrococcus abyssi (strain GE5 / Orsay).